The chain runs to 147 residues: Ribonuclease H (147 aa).

Residues Asp8, Glu46, Asp68, and Asp132 each coordinate Mg(2+).

This sequence belongs to the RNase H family. As to quaternary structure, monomer. Mg(2+) serves as cofactor.

It localises to the cytoplasm. It carries out the reaction Endonucleolytic cleavage to 5'-phosphomonoester.. In terms of biological role, endonuclease that specifically degrades the RNA of RNA-DNA hybrids. This chain is Ribonuclease H, found in Geotalea uraniireducens (strain Rf4) (Geobacter uraniireducens).